Reading from the N-terminus, the 745-residue chain is Elongation factor G, mitochondrial (745 aa).

The 278-residue stretch at 40-317 folds into the tr-type G domain; it reads ERIRNIGISA…AVLDYLPNPG (278 aa). Residues 49 to 56, 116 to 120, and 170 to 173 each bind GTP; these read AHIDSGKT, DTPGH, and NKLD.

This sequence belongs to the TRAFAC class translation factor GTPase superfamily. Classic translation factor GTPase family. EF-G/EF-2 subfamily.

The protein resides in the mitochondrion. The protein operates within protein biosynthesis; polypeptide chain elongation. Its function is as follows. Mitochondrial GTPase that catalyzes the GTP-dependent ribosomal translocation step during translation elongation. During this step, the ribosome changes from the pre-translocational (PRE) to the post-translocational (POST) state as the newly formed A-site-bound peptidyl-tRNA and P-site-bound deacylated tRNA move to the P and E sites, respectively. Catalyzes the coordinated movement of the two tRNA molecules, the mRNA and conformational changes in the ribosome. Essential during development as it acts as a retrograde signal from mitochondria to the nucleus to slow down cell proliferation if mitochondrial energy output is low. This Drosophila yakuba (Fruit fly) protein is Elongation factor G, mitochondrial.